The primary structure comprises 565 residues: Oxygen-dependent choline dehydrogenase (565 aa).

7 to 36 lines the FAD pocket; it reads DYIICGAGSAGNVLATRLTEDPDVTVLLLE. The active-site Proton acceptor is His-474.

The protein belongs to the GMC oxidoreductase family. FAD is required as a cofactor.

It catalyses the reaction choline + A = betaine aldehyde + AH2. The enzyme catalyses betaine aldehyde + NAD(+) + H2O = glycine betaine + NADH + 2 H(+). It participates in amine and polyamine biosynthesis; betaine biosynthesis via choline pathway; betaine aldehyde from choline (cytochrome c reductase route): step 1/1. In terms of biological role, involved in the biosynthesis of the osmoprotectant glycine betaine. Catalyzes the oxidation of choline to betaine aldehyde and betaine aldehyde to glycine betaine at the same rate. This Burkholderia thailandensis (strain ATCC 700388 / DSM 13276 / CCUG 48851 / CIP 106301 / E264) protein is Oxygen-dependent choline dehydrogenase.